The following is a 675-amino-acid chain: Polyamine deacetylase HDAC10 (675 aa).

D22 lines the substrate pocket. The Substrate specificity motif lies at 23 to 26 (PACE). D94 contacts substrate. H137 acts as the Proton donor/acceptor in catalysis. Positions 174, 176, and 267 each coordinate Zn(2+). Position 307 (Y307) interacts with substrate. Residues 362–399 (LAQSETNPKRPRLDATNGGPKESSEPASESNPKKTAQD) form a disordered region.

It belongs to the histone deacetylase family. HD type 2 subfamily.

The protein localises to the cytoplasm. Its subcellular location is the nucleus. The catalysed reaction is N(8)-acetylspermidine + H2O = spermidine + acetate. The enzyme catalyses N-acetylputrescine + H2O = putrescine + acetate. It catalyses the reaction N-acetylcadaverine + H2O = cadaverine + acetate. Its function is as follows. Polyamine deacetylase (PDAC), which acts preferentially on N(8)-acetylspermidine, and also on acetylcadaverine and acetylputrescine. Exhibits attenuated catalytic activity toward N(1),N(8)-diacetylspermidine and very low activity, if any, toward N(1)-acetylspermidine. Has a very weak lysine deacetylase, if any. The polypeptide is Polyamine deacetylase HDAC10 (hdac10) (Danio rerio (Zebrafish)).